The sequence spans 617 residues: Glutamine--fructose-6-phosphate aminotransferase [isomerizing] (617 aa).

Cys2 acts as the Nucleophile; for GATase activity in catalysis. The Glutamine amidotransferase type-2 domain maps to 2 to 222 (CGIIGLAFAE…DGEFGWISPE (221 aa)). 2 SIS domains span residues 293-432 (AAGL…EAGR) and 466-607 (AASL…PDKP). The For Fru-6P isomerization activity role is filled by Lys612.

In terms of assembly, homodimer.

It is found in the cytoplasm. The enzyme catalyses D-fructose 6-phosphate + L-glutamine = D-glucosamine 6-phosphate + L-glutamate. In terms of biological role, catalyzes the first step in hexosamine metabolism, converting fructose-6P into glucosamine-6P using glutamine as a nitrogen source. This Aeropyrum pernix (strain ATCC 700893 / DSM 11879 / JCM 9820 / NBRC 100138 / K1) protein is Glutamine--fructose-6-phosphate aminotransferase [isomerizing].